We begin with the raw amino-acid sequence, 1027 residues long: Presequence protease, mitochondrial (1027 aa).

Residues 1 to 22 constitute a mitochondrion transit peptide; it reads MIRQCWAGLRLCRALYQTSYRW. Residue histidine 98 participates in Zn(2+) binding. The Proton acceptor role is filled by glutamate 101. Positions 102 and 199 each coordinate Zn(2+). Cysteine 113 and cysteine 550 form a disulfide bridge. The interval 803-827 is disordered; it reads RKAIRPHVVEKSSNPSPSGSEISRT. Over residues 814–825 the composition is skewed to low complexity; sequence SSNPSPSGSEIS.

It belongs to the peptidase M16 family. PreP subfamily. In terms of assembly, monomer and homodimer; homodimerization is induced by binding of the substrate. Zn(2+) is required as a cofactor. In terms of processing, a disulfide bond locks the enzyme in the closed conformation preventing substrate entry into the catalytic chamber.

The protein resides in the mitochondrion matrix. With respect to regulation, mainly exists in a closed and catalytically competent conformation but a closed-to-open switch allows substrate entry into the catalytic chamber. Substrate binding induces closure and dimerization. A disulfide bond may lock the enzyme in a closed conformation preventing substrate entry into the catalytic chamber, participating in redox regulation of the enzyme. Inhibited by metal-chelating agents. Inhibited by nickel and zinc excess, and slightly activated by manganese. Metalloendopeptidase of the mitochondrial matrix that functions in peptide cleavage and degradation rather than in protein processing. Has an ATP-independent activity. Specifically cleaves peptides in the range of 5 to 65 residues. Shows a preference for cleavage after small polar residues and before basic residues, but without any positional preference. Degrades the transit peptides of mitochondrial proteins after their cleavage. Also degrades other unstructured peptides. The chain is Presequence protease, mitochondrial (pitrm1) from Xenopus laevis (African clawed frog).